Reading from the N-terminus, the 251-residue chain is GTP cyclohydrolase FolE2 (251 aa).

Belongs to the GTP cyclohydrolase IV family.

The catalysed reaction is GTP + H2O = 7,8-dihydroneopterin 3'-triphosphate + formate + H(+). Its pathway is cofactor biosynthesis; 7,8-dihydroneopterin triphosphate biosynthesis; 7,8-dihydroneopterin triphosphate from GTP: step 1/1. Converts GTP to 7,8-dihydroneopterin triphosphate. The sequence is that of GTP cyclohydrolase FolE2 from Desulfotalea psychrophila (strain LSv54 / DSM 12343).